Consider the following 167-residue polypeptide: uncharacterized protein (167 aa).

The next 2 helical transmembrane spans lie at 96-115 (YVPAFIPLFAAYLTMFFNFY) and 119-138 (WGALSFAAGTIAAIVWIIAV).

It localises to the cell membrane. This is an uncharacterized protein from Bacillus subtilis (strain 168).